Consider the following 229-residue polypeptide: Purine nucleoside phosphorylase BB_0467 (229 aa).

Residues His55, Cys91, and His108 each coordinate Zn(2+).

Belongs to the purine nucleoside phosphorylase YfiH/LACC1 family. Homodimer. Cu(2+) serves as cofactor. Requires Zn(2+) as cofactor.

The enzyme catalyses adenosine + phosphate = alpha-D-ribose 1-phosphate + adenine. The catalysed reaction is S-methyl-5'-thioadenosine + phosphate = 5-(methylsulfanyl)-alpha-D-ribose 1-phosphate + adenine. It catalyses the reaction inosine + phosphate = alpha-D-ribose 1-phosphate + hypoxanthine. It carries out the reaction adenosine + H2O + H(+) = inosine + NH4(+). Purine nucleoside enzyme that catalyzes the phosphorolysis of adenosine and inosine nucleosides, yielding D-ribose 1-phosphate and the respective free bases, adenine and hypoxanthine. Also catalyzes the phosphorolysis of S-methyl-5'-thioadenosine into adenine and S-methyl-5-thio-alpha-D-ribose 1-phosphate. Also has adenosine deaminase activity. This Borreliella burgdorferi (strain ATCC 35210 / DSM 4680 / CIP 102532 / B31) (Borrelia burgdorferi) protein is Purine nucleoside phosphorylase BB_0467.